We begin with the raw amino-acid sequence, 164 residues long: Transcription factor MafF (164 aa).

A basic motif region spans residues 51-76 (RLKQRRRTLKNRGYAASCRVKRVCQK). One can recognise a bZIP domain in the interval 51–114 (RLKQRRRTLK…DALRGKCEAL (64 aa)). Residues 79 to 93 (LQKQKSELEREVDKL) are leucine-zipper. A disordered region spans residues 141 to 164 (KSTPGSGSGPAHGPDPAHGPASCS). The segment covering 149–164 (GPAHGPDPAHGPASCS) has biased composition (low complexity).

It belongs to the bZIP family. Maf subfamily. Monomer and homo- or heterodimer. Interacts with MIP. Forms high affinity heterodimers with members of the CNC-bZIP family such as NFE2L1/NRF1. Expressed in the term myometrium and kidney.

The protein resides in the nucleus. Functionally, since they lack a putative transactivation domain, the small Mafs behave as transcriptional repressors when they dimerize among themselves. However, they seem to serve as transcriptional activators by dimerizing with other (usually larger) basic-zipper proteins, such as NFE2L1/NRF1, and recruiting them to specific DNA-binding sites. Interacts with the upstream promoter region of the oxytocin receptor gene. May be a transcriptional enhancer in the up-regulation of the oxytocin receptor gene at parturition. The polypeptide is Transcription factor MafF (MAFF) (Homo sapiens (Human)).